The following is a 591-amino-acid chain: Metalloendopeptidase OPG085 (591 aa).

H41 provides a ligand contact to Zn(2+). Residue E44 is part of the active site. Zn(2+)-binding residues include H45 and E112.

The protein belongs to the peptidase M44 family. It depends on Zn(2+) as a cofactor. In terms of processing, undergoes proteolytic processing during the course of infection. May be cleaved into 46 kDa and 22 kDa products (Potential).

The protein localises to the virion. In terms of biological role, probably involved in maturation of some viral proteins by processing them preferentially at Ala-Gly-|-Ser/Thr/Lys motifs. Does not seem to be responsible for the cleavage of major core proteins. This Monkeypox virus protein is Metalloendopeptidase OPG085 (OPG085).